The primary structure comprises 499 residues: Glycerol kinase (499 aa).

Thr-11 lines the ADP pocket. 3 residues coordinate ATP: Thr-11, Ser-12, and Ser-13. Sn-glycerol 3-phosphate is bound at residue Thr-11. Arg-15 contacts ADP. Arg-81, Glu-82, Tyr-133, and Asp-242 together coordinate sn-glycerol 3-phosphate. Glycerol-binding residues include Arg-81, Glu-82, Tyr-133, Asp-242, and Gln-243. Positions 264 and 309 each coordinate ADP. 4 residues coordinate ATP: Thr-264, Gly-309, Gln-313, and Gly-414. Positions 414 and 418 each coordinate ADP.

It belongs to the FGGY kinase family.

It carries out the reaction glycerol + ATP = sn-glycerol 3-phosphate + ADP + H(+). The protein operates within polyol metabolism; glycerol degradation via glycerol kinase pathway; sn-glycerol 3-phosphate from glycerol: step 1/1. With respect to regulation, inhibited by fructose 1,6-bisphosphate (FBP). In terms of biological role, key enzyme in the regulation of glycerol uptake and metabolism. Catalyzes the phosphorylation of glycerol to yield sn-glycerol 3-phosphate. This Methylibium petroleiphilum (strain ATCC BAA-1232 / LMG 22953 / PM1) protein is Glycerol kinase.